Consider the following 66-residue polypeptide: Ribosome biogenesis protein Nop10 (66 aa).

It belongs to the NOP10 family.

In terms of biological role, involved in ribosome biogenesis; more specifically in 18S rRNA pseudouridylation and in cleavage of pre-rRNA. The polypeptide is Ribosome biogenesis protein Nop10 (Desulfurococcus amylolyticus (strain DSM 18924 / JCM 16383 / VKM B-2413 / 1221n) (Desulfurococcus kamchatkensis)).